We begin with the raw amino-acid sequence, 237 residues long: Mitochondrial inner membrane protease atp23 (237 aa).

Position 136 (histidine 136) interacts with a divalent metal cation. Glutamate 137 is a catalytic residue. Histidine 140 serves as a coordination point for a divalent metal cation.

This sequence belongs to the peptidase M76 family.

The protein resides in the mitochondrion inner membrane. Its function is as follows. Has a dual role in the assembly of mitochondrial ATPase. Acts as a protease that removes N-terminal residues of mitochondrial ATPase CF(0) subunit 6 at the intermembrane space side. Also involved in the correct assembly of the membrane-embedded ATPase CF(0) particle, probably mediating association of subunit 6 with the subunit 9 ring. The protein is Mitochondrial inner membrane protease atp23 (atp23) of Aspergillus clavatus (strain ATCC 1007 / CBS 513.65 / DSM 816 / NCTC 3887 / NRRL 1 / QM 1276 / 107).